Consider the following 72-residue polypeptide: Translation initiation factor IF-1 (72 aa).

One can recognise an S1-like domain in the interval 1–72; sequence MAKEDSIEMQ…TKGRIVFRAR (72 aa).

This sequence belongs to the IF-1 family. Component of the 30S ribosomal translation pre-initiation complex which assembles on the 30S ribosome in the order IF-2 and IF-3, IF-1 and N-formylmethionyl-tRNA(fMet); mRNA recruitment can occur at any time during PIC assembly.

Its subcellular location is the cytoplasm. In terms of biological role, one of the essential components for the initiation of protein synthesis. Stabilizes the binding of IF-2 and IF-3 on the 30S subunit to which N-formylmethionyl-tRNA(fMet) subsequently binds. Helps modulate mRNA selection, yielding the 30S pre-initiation complex (PIC). Upon addition of the 50S ribosomal subunit IF-1, IF-2 and IF-3 are released leaving the mature 70S translation initiation complex. In Shewanella amazonensis (strain ATCC BAA-1098 / SB2B), this protein is Translation initiation factor IF-1.